Reading from the N-terminus, the 96-residue chain is Large ribosomal subunit protein uL18m (96 aa).

This sequence belongs to the universal ribosomal protein uL18 family.

The protein resides in the mitochondrion. This chain is Large ribosomal subunit protein uL18m (RPL18), found in Reclinomonas americana.